The sequence spans 277 residues: Shikimate dehydrogenase (NADP(+)) (277 aa).

Residues 15–17 (SLS) and T62 contribute to the shikimate site. K66 functions as the Proton acceptor in the catalytic mechanism. Residues N87 and D102 each coordinate shikimate. NADP(+) is bound by residues 127-131 (GAGGA), 151-156 (NRTVDK), and I219. Position 221 (Y221) interacts with shikimate. An NADP(+)-binding site is contributed by G242.

This sequence belongs to the shikimate dehydrogenase family. Homodimer.

The catalysed reaction is shikimate + NADP(+) = 3-dehydroshikimate + NADPH + H(+). It functions in the pathway metabolic intermediate biosynthesis; chorismate biosynthesis; chorismate from D-erythrose 4-phosphate and phosphoenolpyruvate: step 4/7. Involved in the biosynthesis of the chorismate, which leads to the biosynthesis of aromatic amino acids. Catalyzes the reversible NADPH linked reduction of 3-dehydroshikimate (DHSA) to yield shikimate (SA). The chain is Shikimate dehydrogenase (NADP(+)) from Bacillus cereus (strain 03BB102).